Here is a 577-residue protein sequence, read N- to C-terminus: Putative laccase-1 (577 aa).

An N-terminal signal peptide occupies residues 1–28 (MGTAKIPALLWFLLAGLVLALAVNPAHG). Plastocyanin-like domains follow at residues 37–153 (FITE…PKRG) and 163–316 (KEIP…YTDS). Asn-42 and Asn-83 each carry an N-linked (GlcNAc...) asparagine glycan. Residues His-87 and His-89 each coordinate Cu cation. N-linked (GlcNAc...) asparagine glycosylation is present at Asn-115. 2 residues coordinate Cu cation: His-132 and His-134. N-linked (GlcNAc...) asparagine glycosylation is found at Asn-276, Asn-304, Asn-382, and Asn-402. The Plastocyanin-like 3 domain maps to 442 to 561 (DINGGGPLLT…DTMFIVKDGK (120 aa)). Cu cation contacts are provided by His-478, His-481, His-483, His-540, Cys-541, His-542, His-546, and Met-551.

Belongs to the multicopper oxidase family. Requires Cu cation as cofactor.

It is found in the secreted. The protein localises to the extracellular space. Its subcellular location is the apoplast. The enzyme catalyses 4 hydroquinone + O2 = 4 benzosemiquinone + 2 H2O. In terms of biological role, lignin degradation and detoxification of lignin-derived products. This chain is Putative laccase-1 (LAC1), found in Oryza sativa subsp. japonica (Rice).